The primary structure comprises 253 residues: Indole-3-glycerol phosphate synthase (253 aa).

Belongs to the TrpC family.

The enzyme catalyses 1-(2-carboxyphenylamino)-1-deoxy-D-ribulose 5-phosphate + H(+) = (1S,2R)-1-C-(indol-3-yl)glycerol 3-phosphate + CO2 + H2O. The protein operates within amino-acid biosynthesis; L-tryptophan biosynthesis; L-tryptophan from chorismate: step 4/5. The protein is Indole-3-glycerol phosphate synthase of Bacillus cereus (strain B4264).